Consider the following 668-residue polypeptide: GTP-binding protein 1 (668 aa).

The segment at 1–32 (MAAERSRSPVDSPVPASMFAPEPSSPGAARAA) is disordered. Ser6, Ser8, Ser12, Ser24, Ser25, Ser44, Ser47, and Ser69 each carry phosphoserine. A tr-type G domain is found at 158 to 389 (FLEVRVAVVG…LNLLSPRTSY (232 aa)). The G1 stretch occupies residues 167–174 (GNVDAGKS). Residue 167–174 (GNVDAGKS) coordinates GTP. The segment at 206–210 (GRTSS) is G2. Residues 252–255 (DLAG) form a G3 region. GTP-binding positions include 252–256 (DLAGH) and 308–311 (TKID). The interval 308–311 (TKID) is G4. Residues 366-368 (SNV) are G5. Over residues 573–595 (LLQTTNNSPMNSKPQQIKMQSTK) the composition is skewed to polar residues. The disordered stretch occupies residues 573 to 668 (LLQTTNNSPM…GACVTPASGC (96 aa)). Ser580 bears the Phosphoserine mark. Low complexity predominate over residues 609–619 (GVPAAGGPPTG). Polar residues predominate over residues 624–637 (SLGTAQAASTSGLQ). Residues 646-657 (GRRRGGQRHKVK) are compositionally biased toward basic residues.

It belongs to the TRAFAC class translation factor GTPase superfamily. Classic translation factor GTPase family. GTPBP1 subfamily. Interacts with EXOSC2/RRP4, EXOSC3/RRP40, EXOSC5/RRP46, HNRNPD, HNRNPR and SYNCRIP. Identified in a complex with AANAT mRNA, but does not bind mRNA by itself. In terms of tissue distribution, detected in some neurons in the brain cortex. Detected in small arteries, dendritic cells and macrophages in the thymus. Detected in lung bronchi, in bronchial epithelial cells and in bronchial smooth muscle cells. Detected in smooth muscle cells in a broad range of organs (at protein level). Expressed in brain, thymus, lung, and kidney.

The protein localises to the cytoplasm. In terms of biological role, promotes degradation of target mRNA species. Plays a role in the regulation of circadian mRNA stability. Binds GTP and has GTPase activity. In Mus musculus (Mouse), this protein is GTP-binding protein 1 (Gtpbp1).